Here is a 276-residue protein sequence, read N- to C-terminus: MSARWTTAVLDPQTTGGWAVARSPEGFLVDANGALFPRDWLKRQELDVLCEHGIGHFDGQPVFLLELRTASEVQGCNWQGLRRFMLEGDFDTYKVLGYAAQIGTWAREHRFCGSCGQPMTQIHWERAMYCQPCDLRSYPRISPSMIVLITRGDEVLLARSPRFVTGVYSTLAGFAEPGESAEECLVREVREEVAIEVRNIQYVGSQCWPFPHSMMLGFHAEYAGGEIVMQPDEIEDAQWFSVHDLPPLPAGRSIARYLIDLYVARRLGLAEPVLPA.

R82 contacts substrate. Positions 112 and 115 each coordinate Zn(2+). Substrate is bound at residue E125. C130 and C133 together coordinate Zn(2+). Y138 contacts substrate. Positions 139-262 (PRISPSMIVL…SIARYLIDLY (124 aa)) constitute a Nudix hydrolase domain. The a divalent metal cation site is built by A172, E188, and E192. A Nudix box motif is present at residues 173-194 (GFAEPGESAEECLVREVREEVA). A substrate-binding site is contributed by 206 to 213 (QCWPFPHS). E233 contacts a divalent metal cation. Residue A255 participates in substrate binding.

The protein belongs to the Nudix hydrolase family. NudC subfamily. In terms of assembly, homodimer. Mg(2+) serves as cofactor. Requires Mn(2+) as cofactor. Zn(2+) is required as a cofactor.

It carries out the reaction a 5'-end NAD(+)-phospho-ribonucleoside in mRNA + H2O = a 5'-end phospho-adenosine-phospho-ribonucleoside in mRNA + beta-nicotinamide D-ribonucleotide + 2 H(+). The catalysed reaction is NAD(+) + H2O = beta-nicotinamide D-ribonucleotide + AMP + 2 H(+). It catalyses the reaction NADH + H2O = reduced beta-nicotinamide D-ribonucleotide + AMP + 2 H(+). Functionally, mRNA decapping enzyme that specifically removes the nicotinamide adenine dinucleotide (NAD) cap from a subset of mRNAs by hydrolyzing the diphosphate linkage to produce nicotinamide mononucleotide (NMN) and 5' monophosphate mRNA. The NAD-cap is present at the 5'-end of some mRNAs and stabilizes RNA against 5'-processing. Has preference for mRNAs with a 5'-end purine. Catalyzes the hydrolysis of a broad range of dinucleotide pyrophosphates. In Pseudomonas entomophila (strain L48), this protein is NAD-capped RNA hydrolase NudC.